A 298-amino-acid chain; its full sequence is Protoheme IX farnesyltransferase (298 aa).

A run of 9 helical transmembrane segments spans residues 26–46, 52–72, 99–119, 120–140, 148–168, 174–194, 219–239, 241–261, and 276–296; these read VVSLIVFTAVIGMFLSVPGVV, IFATVGIAFVAGAAAAVNCLV, FVFLALVGGAGLLILHQLVNP, LTMWLTLGTFVGYAIIYTVIL, IVIGGASGAMPPVLGWAAVTG, ALLLFLIIFAWTPPHFWALAL, LHVLLYTLILIAVTLMPYATQ, SGLIYLAGAIVLDVIFLYYAV, and FRYSILYLAGLFAVLLVDHYI.

This sequence belongs to the UbiA prenyltransferase family. Protoheme IX farnesyltransferase subfamily.

The protein resides in the cell inner membrane. It carries out the reaction heme b + (2E,6E)-farnesyl diphosphate + H2O = Fe(II)-heme o + diphosphate. It functions in the pathway porphyrin-containing compound metabolism; heme O biosynthesis; heme O from protoheme: step 1/1. Functionally, converts heme B (protoheme IX) to heme O by substitution of the vinyl group on carbon 2 of heme B porphyrin ring with a hydroxyethyl farnesyl side group. The polypeptide is Protoheme IX farnesyltransferase (Nitrosospira multiformis (strain ATCC 25196 / NCIMB 11849 / C 71)).